Here is a 293-residue protein sequence, read N- to C-terminus: 4-hydroxy-tetrahydrodipicolinate synthase (293 aa).

Thr47 serves as a coordination point for pyruvate. Tyr135 serves as the catalytic Proton donor/acceptor. Catalysis depends on Lys163, which acts as the Schiff-base intermediate with substrate. Ile204 contributes to the pyruvate binding site.

Belongs to the DapA family. In terms of assembly, homotetramer; dimer of dimers.

Its subcellular location is the cytoplasm. It carries out the reaction L-aspartate 4-semialdehyde + pyruvate = (2S,4S)-4-hydroxy-2,3,4,5-tetrahydrodipicolinate + H2O + H(+). It functions in the pathway amino-acid biosynthesis; L-lysine biosynthesis via DAP pathway; (S)-tetrahydrodipicolinate from L-aspartate: step 3/4. Functionally, catalyzes the condensation of (S)-aspartate-beta-semialdehyde [(S)-ASA] and pyruvate to 4-hydroxy-tetrahydrodipicolinate (HTPA). This Brachyspira hyodysenteriae (strain ATCC 49526 / WA1) protein is 4-hydroxy-tetrahydrodipicolinate synthase.